A 227-amino-acid polypeptide reads, in one-letter code: Cytochrome c oxidase subunit 2 (227 aa).

Over methionine 1–serine 14 the chain is Mitochondrial intermembrane. The chain crosses the membrane as a helical span at residues proline 15 to methionine 45. Over leucine 46–glutamine 59 the chain is Mitochondrial matrix. The helical transmembrane segment at glutamate 60–methionine 87 threads the bilayer. Residues aspartate 88–leucine 227 lie on the Mitochondrial intermembrane side of the membrane. Cu cation is bound by residues histidine 161, cysteine 196, glutamate 198, cysteine 200, histidine 204, and methionine 207. Residue glutamate 198 participates in Mg(2+) binding. Tyrosine 218 carries the post-translational modification Phosphotyrosine.

The protein belongs to the cytochrome c oxidase subunit 2 family. As to quaternary structure, component of the cytochrome c oxidase (complex IV, CIV), a multisubunit enzyme composed of 14 subunits. The complex is composed of a catalytic core of 3 subunits MT-CO1, MT-CO2 and MT-CO3, encoded in the mitochondrial DNA, and 11 supernumerary subunits COX4I, COX5A, COX5B, COX6A, COX6B, COX6C, COX7A, COX7B, COX7C, COX8 and NDUFA4, which are encoded in the nuclear genome. The complex exists as a monomer or a dimer and forms supercomplexes (SCs) in the inner mitochondrial membrane with NADH-ubiquinone oxidoreductase (complex I, CI) and ubiquinol-cytochrome c oxidoreductase (cytochrome b-c1 complex, complex III, CIII), resulting in different assemblies (supercomplex SCI(1)III(2)IV(1) and megacomplex MCI(2)III(2)IV(2)). Found in a complex with TMEM177, COA6, COX18, COX20, SCO1 and SCO2. Interacts with TMEM177 in a COX20-dependent manner. Interacts with COX20. Interacts with COX16. The cofactor is Cu cation.

It is found in the mitochondrion inner membrane. The catalysed reaction is 4 Fe(II)-[cytochrome c] + O2 + 8 H(+)(in) = 4 Fe(III)-[cytochrome c] + 2 H2O + 4 H(+)(out). In terms of biological role, component of the cytochrome c oxidase, the last enzyme in the mitochondrial electron transport chain which drives oxidative phosphorylation. The respiratory chain contains 3 multisubunit complexes succinate dehydrogenase (complex II, CII), ubiquinol-cytochrome c oxidoreductase (cytochrome b-c1 complex, complex III, CIII) and cytochrome c oxidase (complex IV, CIV), that cooperate to transfer electrons derived from NADH and succinate to molecular oxygen, creating an electrochemical gradient over the inner membrane that drives transmembrane transport and the ATP synthase. Cytochrome c oxidase is the component of the respiratory chain that catalyzes the reduction of oxygen to water. Electrons originating from reduced cytochrome c in the intermembrane space (IMS) are transferred via the dinuclear copper A center (CU(A)) of subunit 2 and heme A of subunit 1 to the active site in subunit 1, a binuclear center (BNC) formed by heme A3 and copper B (CU(B)). The BNC reduces molecular oxygen to 2 water molecules using 4 electrons from cytochrome c in the IMS and 4 protons from the mitochondrial matrix. The protein is Cytochrome c oxidase subunit 2 (MT-CO2) of Rousettus leschenaultii (Leschenault's rousette).